A 344-amino-acid chain; its full sequence is Dihydroorotase (344 aa).

The Zn(2+) site is built by His-13 and His-15. Residues 15-17 (HLR) and Asn-41 each bind substrate. The Zn(2+) site is built by Lys-99, His-136, and His-174. Lys-99 bears the N6-carboxylysine mark. His-136 contributes to the substrate binding site. Leu-219 is a substrate binding site. Asp-247 lines the Zn(2+) pocket. Asp-247 is an active-site residue. Positions 251 and 263 each coordinate substrate.

This sequence belongs to the metallo-dependent hydrolases superfamily. DHOase family. Class II DHOase subfamily. As to quaternary structure, homodimer. It depends on Zn(2+) as a cofactor.

It carries out the reaction (S)-dihydroorotate + H2O = N-carbamoyl-L-aspartate + H(+). It functions in the pathway pyrimidine metabolism; UMP biosynthesis via de novo pathway; (S)-dihydroorotate from bicarbonate: step 3/3. In terms of biological role, catalyzes the reversible cyclization of carbamoyl aspartate to dihydroorotate. This is Dihydroorotase from Microcystis aeruginosa (strain NIES-843 / IAM M-2473).